Here is a 1408-residue protein sequence, read N- to C-terminus: DNA-directed RNA polymerase subunit beta' (1408 aa).

Zn(2+)-binding residues include Cys70, Cys72, Cys85, and Cys88. 3 residues coordinate Mg(2+): Asp460, Asp462, and Asp464. 4 residues coordinate Zn(2+): Cys814, Cys888, Cys895, and Cys898.

The protein belongs to the RNA polymerase beta' chain family. The RNAP catalytic core consists of 2 alpha, 1 beta, 1 beta' and 1 omega subunit. When a sigma factor is associated with the core the holoenzyme is formed, which can initiate transcription. Requires Mg(2+) as cofactor. It depends on Zn(2+) as a cofactor.

The enzyme catalyses RNA(n) + a ribonucleoside 5'-triphosphate = RNA(n+1) + diphosphate. Its function is as follows. DNA-dependent RNA polymerase catalyzes the transcription of DNA into RNA using the four ribonucleoside triphosphates as substrates. The polypeptide is DNA-directed RNA polymerase subunit beta' (Baumannia cicadellinicola subsp. Homalodisca coagulata).